The sequence spans 503 residues: ATP synthase subunit alpha (503 aa).

169 to 176 serves as a coordination point for ATP; sequence GDRKTGKT.

This sequence belongs to the ATPase alpha/beta chains family. F-type ATPases have 2 components, CF(1) - the catalytic core - and CF(0) - the membrane proton channel. CF(1) has five subunits: alpha(3), beta(3), gamma(1), delta(1), epsilon(1). CF(0) has three main subunits: a(1), b(2) and c(9-12). The alpha and beta chains form an alternating ring which encloses part of the gamma chain. CF(1) is attached to CF(0) by a central stalk formed by the gamma and epsilon chains, while a peripheral stalk is formed by the delta and b chains.

The protein localises to the cell membrane. The enzyme catalyses ATP + H2O + 4 H(+)(in) = ADP + phosphate + 5 H(+)(out). Functionally, produces ATP from ADP in the presence of a proton gradient across the membrane. The alpha chain is a regulatory subunit. This Ligilactobacillus salivarius (strain UCC118) (Lactobacillus salivarius) protein is ATP synthase subunit alpha.